A 142-amino-acid chain; its full sequence is FAD synthase (142 aa).

ATP is bound by residues 9–10 (VF), 14–17 (HLGH), Asp93, and Tyr120.

Belongs to the archaeal FAD synthase family. Homodimer. A divalent metal cation serves as cofactor.

The enzyme catalyses FMN + ATP + H(+) = FAD + diphosphate. It participates in cofactor biosynthesis; FAD biosynthesis; FAD from FMN: step 1/1. In terms of biological role, catalyzes the transfer of the AMP portion of ATP to flavin mononucleotide (FMN) to produce flavin adenine dinucleotide (FAD) coenzyme. The sequence is that of FAD synthase from Thermoplasma acidophilum (strain ATCC 25905 / DSM 1728 / JCM 9062 / NBRC 15155 / AMRC-C165).